We begin with the raw amino-acid sequence, 431 residues long: MSLDKSKHEKYVQILREELVPALGCTEPIAIAYTAANLRKIMGGIPDEILIESSGNIIKNAKSVIVPNTGGMKGMEASALIGLIGGNADKGLEVLADVTEEHVKLAHEYLAKSCTKLKLMDTPASLHIRITGKLNGDTGVAELIHQHTNIVLLKKNDEIIFEKPFSLESAAGALTDRTCLNVKDILDFADTVPVDEVSPIIMRQVEYNMRVSEDGLKTSYGIETGKNILKYNQKKGDDFSVKVQAEGEVAAASDARMCGCSYPVITNSGSGNQGLAVSVPVVVYARENKISEEKLIRCLIVSNLLAIHQKTGIGRLSAYCGAVTAGAACAAAITYMKGGSYEQVCGTIVNTLGTVSGILCDGAKQSCAAKIASALDSALFSHELAMDGNFFAGGDGIVKDDIEKTIAGIGVVAAQGMHKTDEVVLQVMLKD.

This sequence belongs to the UPF0597 family.

This Treponema denticola (strain ATCC 35405 / DSM 14222 / CIP 103919 / JCM 8153 / KCTC 15104) protein is UPF0597 protein TDE_2144.